The sequence spans 50 residues: MNVYSVFIFAILAISSASGIFLPGGGGKKCGGYGGGYGSGVIIGAERPKK.

This chain is Fungus-induced protein 3 (fip-3), found in Caenorhabditis elegans.